Consider the following 379-residue polypeptide: L-lactate dehydrogenase (379 aa).

Positions 1-379 constitute an FMN hydroxy acid dehydrogenase domain; sequence MIISASTDYR…IGRDSLVSLP (379 aa). Tyr24 is a binding site for substrate. FMN-binding residues include Ser106 and Gln127. Residue Tyr129 participates in substrate binding. Thr155 contributes to the FMN binding site. Arg164 lines the substrate pocket. Lys251 contacts FMN. The active-site Proton acceptor is His275. Residue Arg278 coordinates substrate. An FMN-binding site is contributed by 306–330; sequence DSGIRTGLDVVRMLALGADTVLLGR.

Belongs to the FMN-dependent alpha-hydroxy acid dehydrogenase family. FMN is required as a cofactor.

It is found in the cell inner membrane. The catalysed reaction is (S)-lactate + A = pyruvate + AH2. In terms of biological role, catalyzes the conversion of L-lactate to pyruvate. Is coupled to the respiratory chain. The polypeptide is L-lactate dehydrogenase (Stenotrophomonas maltophilia (strain K279a)).